A 97-amino-acid polypeptide reads, in one-letter code: NADH-ubiquinone oxidoreductase chain 4L (97 aa).

A run of 3 helical transmembrane segments spans residues 1-21, 23-43, and 60-80; these read MALL…ILLN, LHFL…FIGI, and LLLL…MVAL.

This sequence belongs to the complex I subunit 4L family.

The protein localises to the mitochondrion membrane. It catalyses the reaction a ubiquinone + NADH + 5 H(+)(in) = a ubiquinol + NAD(+) + 4 H(+)(out). Functionally, core subunit of the mitochondrial membrane respiratory chain NADH dehydrogenase (Complex I) that is believed to belong to the minimal assembly required for catalysis. Complex I functions in the transfer of electrons from NADH to the respiratory chain. The immediate electron acceptor for the enzyme is believed to be ubiquinone. In Paracentrotus lividus (Common sea urchin), this protein is NADH-ubiquinone oxidoreductase chain 4L (ND4L).